The primary structure comprises 108 residues: Nucleoid-associated protein ACP_0492 (108 aa).

This sequence belongs to the YbaB/EbfC family. Homodimer.

It is found in the cytoplasm. It localises to the nucleoid. Functionally, binds to DNA and alters its conformation. May be involved in regulation of gene expression, nucleoid organization and DNA protection. In Acidobacterium capsulatum (strain ATCC 51196 / DSM 11244 / BCRC 80197 / JCM 7670 / NBRC 15755 / NCIMB 13165 / 161), this protein is Nucleoid-associated protein ACP_0492.